The sequence spans 520 residues: Sodium-dependent dicarboxylate transporter SdcS (520 aa).

The next 14 helical transmembrane spans lie at 30-50, 55-75, 77-97, 104-124, 160-180, 207-227, 242-262, 298-318, 323-343, 362-382, 399-419, 428-448, 452-472, and 491-511; these read AGQL…LLFF, LPWK…WWIT, AIPI…GHIL, SEYG…AIAM, SMFV…LAII, IGYA…PLII, FAKW…ITWL, KVVQ…EFLL, VTSS…LFVI, ELPW…KGIS, GVSP…LTEV, MILP…LLLM, AMAA…AIIF, and LISA…VLGI.

It belongs to the SLC13A/DASS transporter (TC 2.A.47) family. NADC subfamily.

The protein resides in the cell membrane. Its function is as follows. Mediates the transport of the dicarboxylates fumarate, malate, and succinate across the cytoplasmic membrane via a Na(+)-electrochemical gradient. This Staphylococcus aureus (strain MSSA476) protein is Sodium-dependent dicarboxylate transporter SdcS (sdcS).